A 33-amino-acid chain; its full sequence is GIMSIVKDVAKTAAKEAAKGALSTLSCKLAKTC.

C27 and C33 are disulfide-bonded.

Belongs to the frog skin active peptide (FSAP) family. Brevinin subfamily. As to quaternary structure, monomer. As to expression, expressed by the skin glands.

Its subcellular location is the secreted. Functionally, has a non-hemolytic activity. Has a broad spectrum of activity against both Gram-positive and Gram-negative bacteria, fungi and protozoa. In Glandirana rugosa (Japanese wrinkled frog), this protein is Gaegurin-3 (GGN3).